The chain runs to 144 residues: Large ribosomal subunit protein uL15 (144 aa).

A disordered region spans residues M1–E51. Gly residues predominate over residues R21–A31.

Belongs to the universal ribosomal protein uL15 family. Part of the 50S ribosomal subunit.

Its function is as follows. Binds to the 23S rRNA. In Leptothrix cholodnii (strain ATCC 51168 / LMG 8142 / SP-6) (Leptothrix discophora (strain SP-6)), this protein is Large ribosomal subunit protein uL15.